The sequence spans 306 residues: UDP-3-O-acyl-N-acetylglucosamine deacetylase (306 aa).

The Zn(2+) site is built by His81, His241, and Asp245. The active-site Proton donor is His268.

It belongs to the LpxC family. Zn(2+) serves as cofactor.

The catalysed reaction is a UDP-3-O-[(3R)-3-hydroxyacyl]-N-acetyl-alpha-D-glucosamine + H2O = a UDP-3-O-[(3R)-3-hydroxyacyl]-alpha-D-glucosamine + acetate. Its pathway is glycolipid biosynthesis; lipid IV(A) biosynthesis; lipid IV(A) from (3R)-3-hydroxytetradecanoyl-[acyl-carrier-protein] and UDP-N-acetyl-alpha-D-glucosamine: step 2/6. Catalyzes the hydrolysis of UDP-3-O-myristoyl-N-acetylglucosamine to form UDP-3-O-myristoylglucosamine and acetate, the committed step in lipid A biosynthesis. This Hydrogenovibrio crunogenus (strain DSM 25203 / XCL-2) (Thiomicrospira crunogena) protein is UDP-3-O-acyl-N-acetylglucosamine deacetylase.